Consider the following 394-residue polypeptide: tRNA-specific 2-thiouridylase MnmA (394 aa).

ATP is bound by residues 30-37 (AMSGGVDS) and leucine 56. The Nucleophile role is filled by cysteine 124. An intrachain disulfide couples cysteine 124 to cysteine 220. An ATP-binding site is contributed by glycine 148. The interaction with tRNA stretch occupies residues 170–172 (RDQ). The active-site Cysteine persulfide intermediate is cysteine 220.

It belongs to the MnmA/TRMU family.

Its subcellular location is the cytoplasm. The enzyme catalyses S-sulfanyl-L-cysteinyl-[protein] + uridine(34) in tRNA + AH2 + ATP = 2-thiouridine(34) in tRNA + L-cysteinyl-[protein] + A + AMP + diphosphate + H(+). In terms of biological role, catalyzes the 2-thiolation of uridine at the wobble position (U34) of tRNA, leading to the formation of s(2)U34. This chain is tRNA-specific 2-thiouridylase MnmA, found in Hyphomonas neptunium (strain ATCC 15444).